The following is a 450-amino-acid chain: 3-phosphoshikimate 1-carboxyvinyltransferase (450 aa).

3-phosphoshikimate-binding residues include lysine 23, serine 24, and arginine 28. Lysine 23 serves as a coordination point for phosphoenolpyruvate. 2 residues coordinate phosphoenolpyruvate: glycine 96 and arginine 124. The 3-phosphoshikimate site is built by serine 167, serine 168, glutamine 169, serine 196, glutamate 311, and histidine 340. Glutamine 169 serves as a coordination point for phosphoenolpyruvate. Glutamate 311 serves as the catalytic Proton acceptor. Phosphoenolpyruvate-binding residues include arginine 344, arginine 385, and lysine 410. Residues 426–450 are disordered; it reads GQGWGYPQPRSGQRARRATGQGSGG.

Belongs to the EPSP synthase family. As to quaternary structure, monomer.

The protein localises to the cytoplasm. The catalysed reaction is 3-phosphoshikimate + phosphoenolpyruvate = 5-O-(1-carboxyvinyl)-3-phosphoshikimate + phosphate. It functions in the pathway metabolic intermediate biosynthesis; chorismate biosynthesis; chorismate from D-erythrose 4-phosphate and phosphoenolpyruvate: step 6/7. Catalyzes the transfer of the enolpyruvyl moiety of phosphoenolpyruvate (PEP) to the 5-hydroxyl of shikimate-3-phosphate (S3P) to produce enolpyruvyl shikimate-3-phosphate and inorganic phosphate. This chain is 3-phosphoshikimate 1-carboxyvinyltransferase, found in Mycobacterium tuberculosis (strain ATCC 25177 / H37Ra).